Here is a 725-residue protein sequence, read N- to C-terminus: Golgin candidate 4 (725 aa).

Residues 17 to 62 (HDVHDDDEDDDEDLTIYGSTNGGTDRRNSNGFRYSRSPMANGFESP) are disordered. Over residues 21-30 (DDDEDDDEDL) the composition is skewed to acidic residues. The stretch at 66–132 (EIERYKAEIN…LKESRLDLSR (67 aa)) forms a coiled coil. Disordered stretches follow at residues 134-183 (SNNN…SHKK), 191-210 (LEERTRSMASAQARELEKER), and 311-349 (ASQKSTSRKLFPKSTEDLSRHLSSLDEEKAGTFPGKEDM). Over residues 148 to 175 (NRSQRSPTNWKNRNQMNNGIASKPNGTE) the composition is skewed to polar residues. Coiled coils occupy residues 191 to 316 (LEER…QKST), 344 to 407 (PGKE…QTNE), and 437 to 563 (EIRK…LNRM). Residues 324–349 (STEDLSRHLSSLDEEKAGTFPGKEDM) are compositionally biased toward basic and acidic residues. One can recognise a GRIP domain in the interval 562-613 (RMSMDSDFLVDRRIVIKLLVTYFQRNHSREVLDLMVRMLGFSEEEKQRIGLA). The span at 672-688 (ERERREAEDAANKEQEK) shows a compositional bias: basic and acidic residues. A disordered region spans residues 672-725 (ERERREAEDAANKEQEKATVSSTQRPKYEQSDSEFSTVPLTSSNSNHRLSRLLT). A compositionally biased stretch (low complexity) spans 711-725 (LTSSNSNHRLSRLLT).

It is found in the golgi apparatus. Golgi matrix protein playing a role in tethering of vesicles to Golgi membranes and in maintaining the overall structure of the Golgi apparatus. The polypeptide is Golgin candidate 4 (GC4) (Arabidopsis thaliana (Mouse-ear cress)).